The primary structure comprises 61 residues: uncharacterized protein (61 aa).

The protein resides in the mitochondrion. This is an uncharacterized protein from Marchantia polymorpha (Common liverwort).